The following is a 473-amino-acid chain: MGNYHPHGNASIYNTLVRMAQPWSLRYPLVNGQGNFGSPGNNPPAAMRYCCTGDALVRLPFGHSVRIGNFVPAACPNSDNAVNLKVLDRHGDPVVADQLFHSGEHQTYTVRTAEGYEVTGTSNHPLLCLVDVGGVPTLLWKLIEEIRPDDHVVLQRTPPVEFGPADWHDVMEALLLGAFISEGFVSEVRAGFNNCDRDYFAMVVGAYDAVVGGRRYVSSRRIASGSTLHELDIQNIKELKEARLGDLCGQRPADKSVPDWLWHSPAAVKRVFLQALFEGGGSCSALPRNMIQISYSTRSRQLAVDVQQMLLEFGIITRRYRHAVGEHKVLITNRAQAELFATRVGFGGAKQEKLTKILGSMPPCAGMDSDHVPGLARFIRKHCGSRWVDKDWLNRHNVDRIQRWRTSGEKILSHIADPDVRAIATDLTDGRFYYAKVASVTEAGVQPVYSLRVDTDEHAFLTNGFVSHNTEAR.

The Topo IIA-type catalytic domain occupies 1 to 473 (MGNYHPHGNA…GFVSHNTEAR (473 aa)). Tyrosine 49 functions as the O-(5'-phospho-DNA)-tyrosine intermediate in the catalytic mechanism. Residues 175-315 (LLGAFISEGF…VQQMLLEFGI (141 aa)) enclose the DOD-type homing endonuclease domain.

It belongs to the type II topoisomerase GyrA/ParC subunit family. As to quaternary structure, heterotetramer, composed of two GyrA and two GyrB chains. In the heterotetramer, GyrA contains the active site tyrosine that forms a transient covalent intermediate with DNA, while GyrB binds cofactors and catalyzes ATP hydrolysis. This protein undergoes a protein self splicing that involves a post-translational excision of the intervening region (intein) followed by peptide ligation.

It localises to the cytoplasm. It catalyses the reaction ATP-dependent breakage, passage and rejoining of double-stranded DNA.. Functionally, a type II topoisomerase that negatively supercoils closed circular double-stranded (ds) DNA in an ATP-dependent manner to modulate DNA topology and maintain chromosomes in an underwound state. Negative supercoiling favors strand separation, and DNA replication, transcription, recombination and repair, all of which involve strand separation. Also able to catalyze the interconversion of other topological isomers of dsDNA rings, including catenanes and knotted rings. Type II topoisomerases break and join 2 DNA strands simultaneously in an ATP-dependent manner. The polypeptide is DNA gyrase subunit A (gyrA) (Mycobacterium malmoense).